We begin with the raw amino-acid sequence, 84 residues long: Turripeptide IX-01 (84 aa).

A signal peptide spans 1 to 21; the sequence is MGFYMLLTVALLLTSFMSVEA. The propeptide occupies 22 to 39; the sequence is TPVDQAERSAMKESGLAH. Intrachain disulfides connect C48–C70, C55–C74, and C60–C81.

Expressed by the venom duct.

Its subcellular location is the secreted. The chain is Turripeptide IX-01 from Gemmula speciosa (Splendid gem-turris).